A 356-amino-acid chain; its full sequence is Probable butyrate kinase (356 aa).

The protein belongs to the acetokinase family.

It localises to the cytoplasm. The enzyme catalyses butanoate + ATP = butanoyl phosphate + ADP. This chain is Probable butyrate kinase, found in Clostridium perfringens (strain SM101 / Type A).